We begin with the raw amino-acid sequence, 249 residues long: Glucosamine-6-phosphate deaminase (249 aa).

Catalysis depends on D67, which acts as the Proton acceptor; for enolization step. The active-site For ring-opening step is N136. Residue H138 is the Proton acceptor; for ring-opening step of the active site. The active-site For ring-opening step is the E143.

This sequence belongs to the glucosamine/galactosamine-6-phosphate isomerase family. NagB subfamily.

The enzyme catalyses alpha-D-glucosamine 6-phosphate + H2O = beta-D-fructose 6-phosphate + NH4(+). Its pathway is amino-sugar metabolism; N-acetylneuraminate degradation; D-fructose 6-phosphate from N-acetylneuraminate: step 5/5. In terms of biological role, catalyzes the reversible isomerization-deamination of glucosamine 6-phosphate (GlcN6P) to form fructose 6-phosphate (Fru6P) and ammonium ion. The sequence is that of Glucosamine-6-phosphate deaminase from Clostridium botulinum (strain Alaska E43 / Type E3).